We begin with the raw amino-acid sequence, 569 residues long: Proline--tRNA ligase (569 aa).

This sequence belongs to the class-II aminoacyl-tRNA synthetase family. ProS type 1 subfamily. Homodimer.

The protein resides in the cytoplasm. The enzyme catalyses tRNA(Pro) + L-proline + ATP = L-prolyl-tRNA(Pro) + AMP + diphosphate. Functionally, catalyzes the attachment of proline to tRNA(Pro) in a two-step reaction: proline is first activated by ATP to form Pro-AMP and then transferred to the acceptor end of tRNA(Pro). As ProRS can inadvertently accommodate and process non-cognate amino acids such as alanine and cysteine, to avoid such errors it has two additional distinct editing activities against alanine. One activity is designated as 'pretransfer' editing and involves the tRNA(Pro)-independent hydrolysis of activated Ala-AMP. The other activity is designated 'posttransfer' editing and involves deacylation of mischarged Ala-tRNA(Pro). The misacylated Cys-tRNA(Pro) is not edited by ProRS. The protein is Proline--tRNA ligase of Campylobacter jejuni subsp. doylei (strain ATCC BAA-1458 / RM4099 / 269.97).